A 489-amino-acid chain; its full sequence is Cytochrome P450 2C70 (489 aa).

The N-terminal stretch at 1-27 (MALFIFLGIWLSCFLFLFLWNQHRGRG) is a signal peptide. Cys434 contributes to the heme binding site.

This sequence belongs to the cytochrome P450 family. Heme serves as cofactor. Expressed in liver.

It localises to the endoplasmic reticulum membrane. It is found in the microsome membrane. The enzyme catalyses chenodeoxycholate + reduced [NADPH--hemoprotein reductase] + O2 = alpha-muricholate + oxidized [NADPH--hemoprotein reductase] + H2O + H(+). The catalysed reaction is ursodeoxycholate + reduced [NADPH--hemoprotein reductase] + O2 = beta-muricholate + oxidized [NADPH--hemoprotein reductase] + H2O + H(+). In terms of biological role, a cytochrome P450 monooxygenase involved in muricholic acid (MCA) synthesis. Hydroxylates at the 6-beta position two major bile acids, chenodeoxycholic acid (CDCA) and ursodeoxycholic acid (UDCA) to form alpha-MCA and beta-MCA, respectively. May regulate NR1H4/farnesoid X receptor signaling, as taurine-conjugated MCAs are antagonists of NR1H4. Mechanistically, uses molecular oxygen inserting one oxygen atom into a substrate, and reducing the second into a water molecule, with two electrons provided by NADPH via cytochrome P450 reductase (CPR; NADPH-ferrihemoprotein reductase). This Mus musculus (Mouse) protein is Cytochrome P450 2C70.